The primary structure comprises 69 residues: UPF0270 protein VCM66_2532 (69 aa).

It belongs to the UPF0270 family.

The polypeptide is UPF0270 protein VCM66_2532 (Vibrio cholerae serotype O1 (strain M66-2)).